The sequence spans 443 residues: Structure-specific endonuclease subunit SLX1 homolog (443 aa).

Positions 1–27 (METFILSSDSDDDSGPPPSKRRTIEGI) are disordered. Residues 171 to 258 (EFYGVYCLIS…PLVSKSLKEK (88 aa)) enclose the GIY-YIG domain. Residues 340–395 (CRICGKDIEKLWSLVRCISATCPSHFHSKCLSENGLKLKNEHVDHVYPLKANCPTC) form an SLX1-type zinc finger.

Belongs to the SLX1 family. Forms a heterodimer with him-18/slx-4. A divalent metal cation serves as cofactor.

It is found in the nucleus. Its function is as follows. Catalytic subunit of a heterodimeric structure-specific endonuclease that resolves DNA secondary structures generated during DNA repair and recombination. Has endonuclease activity towards branched DNA substrates, introducing single-strand cuts in duplex DNA close to junctions with ss-DNA (Potential). Has a preference for replication forks over 5' flap structures or Holliday junctions and shows much lower activity toward 3' flap structures. Required for proper crossover distribution through inhibition of crossover formation at the central region of chromosomes. This chain is Structure-specific endonuclease subunit SLX1 homolog, found in Caenorhabditis elegans.